A 96-amino-acid polypeptide reads, in one-letter code: uncharacterized protein (96 aa).

Residues 1 to 19 form the signal peptide; it reads MKFLSALLLIVLLISVVFG. Asn-20 carries an N-linked (GlcNAc...) asparagine glycan. Over residues 27 to 46 the composition is skewed to low complexity; that stretch reads AWATTTTGGTTGSQTSPATH. A disordered region spans residues 27-58; the sequence is AWATTTTGGTTGSQTSPATHGGHGGNGGNGHS. The span at 47-56 shows a compositional bias: gly residues; the sequence is GGHGGNGGNG.

It is found in the secreted. This is an uncharacterized protein from Dictyostelium discoideum (Social amoeba).